Consider the following 145-residue polypeptide: S-adenosylmethionine synthase 2 (145 aa).

Residues 6-7, A23, K27, and K31 each bind ATP; that span reads RK. K31 is an L-methionine binding site.

Belongs to the AdoMet synthase family. In terms of assembly, homotetramer. The cofactor is Mn(2+). Mg(2+) serves as cofactor. It depends on Co(2+) as a cofactor. K(+) is required as a cofactor. In terms of tissue distribution, mainly in floral buds and roots.

The protein localises to the cytoplasm. The catalysed reaction is L-methionine + ATP + H2O = S-adenosyl-L-methionine + phosphate + diphosphate. The protein operates within amino-acid biosynthesis; S-adenosyl-L-methionine biosynthesis; S-adenosyl-L-methionine from L-methionine: step 1/1. Functionally, catalyzes the formation of S-adenosylmethionine from methionine and ATP. The reaction comprises two steps that are both catalyzed by the same enzyme: formation of S-adenosylmethionine (AdoMet) and triphosphate, and subsequent hydrolysis of the triphosphate. This Petroselinum crispum (Parsley) protein is S-adenosylmethionine synthase 2 (SMS-2).